The chain runs to 190 residues: dITP/XTP pyrophosphatase (190 aa).

10 to 15 (TTNKHK) contacts substrate. Mg(2+)-binding residues include E39 and D68. Catalysis depends on D68, which acts as the Proton acceptor. Residues A69, 143 to 146 (FGYD), K166, and 171 to 172 (HR) contribute to the substrate site.

The protein belongs to the HAM1 NTPase family. As to quaternary structure, homodimer. Mg(2+) is required as a cofactor.

It carries out the reaction XTP + H2O = XMP + diphosphate + H(+). The catalysed reaction is dITP + H2O = dIMP + diphosphate + H(+). It catalyses the reaction ITP + H2O = IMP + diphosphate + H(+). Its function is as follows. Pyrophosphatase that catalyzes the hydrolysis of nucleoside triphosphates to their monophosphate derivatives, with a high preference for the non-canonical purine nucleotides XTP (xanthosine triphosphate), dITP (deoxyinosine triphosphate) and ITP. Seems to function as a house-cleaning enzyme that removes non-canonical purine nucleotides from the nucleotide pool, thus preventing their incorporation into DNA/RNA and avoiding chromosomal lesions. This Hyperthermus butylicus (strain DSM 5456 / JCM 9403 / PLM1-5) protein is dITP/XTP pyrophosphatase.